A 257-amino-acid chain; its full sequence is MVLIRVLANLLLLQLSYAQKSSELVVGGDECNINEHRSLVFLYNSSFGCGGTLINQQWVLSAAHCDMENVQIYLGLHNLRLRNQDEQIRVAEEKFFCLSNKSYTKWDKDIMLIRLNSSVTYNTHIAPLSLPSSPPRVGSVCRIMGWGAITSPNETFPNVPHCANINILRYSVCRAAYRGLPAQSRTLCAGILQGGIGSCMGDSGGPLICNGEIQGIVSWGDDICAQPHKPVHYTKVFDYSDWIQSIIAGNTTATCPL.

Positions 1–18 (MVLIRVLANLLLLQLSYA) are cleaved as a signal peptide. Residues 19–24 (QKSSEL) constitute a propeptide that is removed on maturation. The Peptidase S1 domain occupies 25 to 248 (VVGGDECNIN…YSDWIQSIIA (224 aa)). 6 disulfide bridges follow: Cys-31/Cys-162, Cys-49/Cys-65, Cys-97/Cys-255, Cys-141/Cys-209, Cys-173/Cys-188, and Cys-199/Cys-224. An N-linked (GlcNAc...) asparagine glycan is attached at Asn-44. The active-site Charge relay system is the His-64. N-linked (GlcNAc...) asparagine glycosylation occurs at Asn-100. Asp-109 (charge relay system) is an active-site residue. 2 N-linked (GlcNAc...) asparagine glycosylation sites follow: Asn-116 and Asn-153. Ser-203 serves as the catalytic Charge relay system. An N-linked (GlcNAc...) asparagine glycan is attached at Asn-250.

It belongs to the peptidase S1 family. Snake venom subfamily. Monomer. In terms of processing, partial deglycosylation has not effect on enzyme activity. In terms of tissue distribution, expressed by the venom gland.

The protein localises to the secreted. Inhibited by PMSF. Snake venom serine protease with tyrosine-specific chymotrypsin-like activity. Hydrolyzes the N-acetyl-L-tyrosine ethyl ester (ATEE). Has weak fibrinogenolytic activity. Weakly hydrolyzes azocasein, Aalpha-chain (FGA) and more slowly Bbeta-chain (FGB) of fibrinogen. Optimal substrates are angiotensins I and II (AGT). This Macrovipera lebetinus (Levantine viper) protein is Chymotrypsin-like protease VLCTLP.